Consider the following 176-residue polypeptide: Large ribosomal subunit protein uL10 (176 aa).

It belongs to the universal ribosomal protein uL10 family. As to quaternary structure, part of the ribosomal stalk of the 50S ribosomal subunit. The N-terminus interacts with L11 and the large rRNA to form the base of the stalk. The C-terminus forms an elongated spine to which L12 dimers bind in a sequential fashion forming a multimeric L10(L12)X complex.

Functionally, forms part of the ribosomal stalk, playing a central role in the interaction of the ribosome with GTP-bound translation factors. The protein is Large ribosomal subunit protein uL10 of Natranaerobius thermophilus (strain ATCC BAA-1301 / DSM 18059 / JW/NM-WN-LF).